The sequence spans 146 residues: Large ribosomal subunit protein uL15 (146 aa).

The disordered stretch occupies residues 1–54; it reads MKLHELKPAAGSRKAPKRVGRGTGSGLGRNAGKGEKGQNARSGGGVRPGFEGGQ. Gly residues-rich tracts occupy residues 21–31 and 42–52; these read RGTGSGLGRNA and SGGGVRPGFEG.

It belongs to the universal ribosomal protein uL15 family. Part of the 50S ribosomal subunit.

In terms of biological role, binds to the 23S rRNA. This is Large ribosomal subunit protein uL15 from Clostridium acetobutylicum (strain ATCC 824 / DSM 792 / JCM 1419 / IAM 19013 / LMG 5710 / NBRC 13948 / NRRL B-527 / VKM B-1787 / 2291 / W).